The sequence spans 597 residues: tRNA uridine 5-carboxymethylaminomethyl modification enzyme MnmG (597 aa).

Residue 11–16 coordinates FAD; that stretch reads GAGHAG. Residue 275 to 289 participates in NAD(+) binding; it reads SPRYCPSIEEKIERY.

It belongs to the MnmG family. In terms of assembly, homodimer. Heterotetramer of two MnmE and two MnmG subunits. The cofactor is FAD.

The protein resides in the cytoplasm. In terms of biological role, NAD-binding protein involved in the addition of a carboxymethylaminomethyl (cmnm) group at the wobble position (U34) of certain tRNAs, forming tRNA-cmnm(5)s(2)U34. In Endomicrobium trichonymphae, this protein is tRNA uridine 5-carboxymethylaminomethyl modification enzyme MnmG.